We begin with the raw amino-acid sequence, 571 residues long: Sulfite reductase [NADPH] hemoprotein beta-component (571 aa).

Residues Cys-435, Cys-441, Cys-480, and Cys-484 each coordinate [4Fe-4S] cluster. Siroheme is bound at residue Cys-484.

Belongs to the nitrite and sulfite reductase 4Fe-4S domain family. As to quaternary structure, alpha(8)-beta(8). The alpha component is a flavoprotein, the beta component is a hemoprotein. The cofactor is siroheme. [4Fe-4S] cluster is required as a cofactor.

The catalysed reaction is hydrogen sulfide + 3 NADP(+) + 3 H2O = sulfite + 3 NADPH + 4 H(+). It functions in the pathway sulfur metabolism; hydrogen sulfide biosynthesis; hydrogen sulfide from sulfite (NADPH route): step 1/1. In terms of biological role, component of the sulfite reductase complex that catalyzes the 6-electron reduction of sulfite to sulfide. This is one of several activities required for the biosynthesis of L-cysteine from sulfate. This Serratia proteamaculans (strain 568) protein is Sulfite reductase [NADPH] hemoprotein beta-component.